The primary structure comprises 411 residues: Common plant regulatory factor 1 (411 aa).

Basic and acidic residues predominate over residues 1-14 (MGNTDDVKAVKPEK). Disordered stretches follow at residues 1–30 (MGNT…SNSH), 130–197 (AMSI…SSVI), and 232–293 (SSLE…KQAE). The segment covering 148-164 (TLSQSKETEGSSDGSNE) has biased composition (polar residues). Positions 235–244 (ELKDSPKEHA) are enriched in basic and acidic residues. Residues 249 to 259 (AGGQQPSTMMP) show a composition bias toward polar residues. Over residues 264 to 293 (LHNDRDLKRERRKQSNRESARRSRLRKQAE) the composition is skewed to basic and acidic residues. Residues 269 to 332 (DLKRERRKQS…EKLTNDNSRL (64 aa)) enclose the bZIP domain. The segment at 271-290 (KRERRKQSNRESARRSRLRK) is basic motif. The tract at residues 297–332 (LAIKVDSLTAENMALKAEINRLTLTAEKLTNDNSRL) is leucine-zipper. The segment at 346 to 411 (DVGLGNNNEK…NPRTDAVAAG (66 aa)) is disordered.

Belongs to the bZIP family. In terms of assembly, binds DNA as a dimer.

It is found in the nucleus. Binds to the G-box-like motif (5'-ACGTGGC-3') of the chalcone synthase (CHS) gene promoter. G-box and G-box-like motifs are defined in promoters of certain plant genes which are regulated by such diverse stimuli as light-induction or hormone control. The polypeptide is Common plant regulatory factor 1 (CPRF1) (Petroselinum crispum (Parsley)).